A 56-amino-acid chain; its full sequence is Preprotein translocase subunit SecG (56 aa).

Topologically, residues 1–29 (MAKEKATLPPTGAGLMRFFDEDTRAVKVS) are cytoplasmic. A helical membrane pass occupies residues 30 to 49 (PKGVIALTLLLIAFEFILHM). The Extracellular portion of the chain corresponds to 50-56 (FGSSIFG).

Belongs to the SEC61-beta family. As to quaternary structure, component of the protein translocase complex. Heterotrimer consisting of alpha (SecY), beta (SecG) and gamma (SecE) subunits. Can form oligomers of the heterotrimer.

It is found in the cell membrane. In terms of biological role, involved in protein export. The function of the beta subunit is unknown, but it may be involved in stabilization of the trimeric complex. The sequence is that of Preprotein translocase subunit SecG from Thermococcus kodakarensis (strain ATCC BAA-918 / JCM 12380 / KOD1) (Pyrococcus kodakaraensis (strain KOD1)).